The following is a 105-amino-acid chain: Heat shock protein HspQ (105 aa).

Belongs to the HspQ family.

The protein localises to the cytoplasm. Its function is as follows. Involved in the degradation of certain denaturated proteins, including DnaA, during heat shock stress. This is Heat shock protein HspQ from Yersinia enterocolitica serotype O:8 / biotype 1B (strain NCTC 13174 / 8081).